A 274-amino-acid chain; its full sequence is Cytochrome b-c1 complex subunit Rieske, mitochondrial (274 aa).

Over 79 to 103 (SHTDIKVPDFSDYRRPEVLDSTKSS) the chain is Mitochondrial matrix. Residues 104–140 (KESSEARKGFSYLVTATTTVGVAYAAKNVVSQFVSSM) traverse the membrane as a helical segment. Residues 141 to 274 (SASADVLAMS…FTSDDMVIVG (134 aa)) lie on the Mitochondrial intermembrane side of the membrane. In terms of domain architecture, Rieske spans 187–272 (EAAVEVSQLR…YEFTSDDMVI (86 aa)). Residues cysteine 217, histidine 219, cysteine 236, histidine 239, and serine 241 each coordinate [2Fe-2S] cluster. Cysteines 222 and 238 form a disulfide.

Belongs to the Rieske iron-sulfur protein family. As to quaternary structure, component of the ubiquinol-cytochrome c oxidoreductase (cytochrome b-c1 complex, complex III, CIII), a multisubunit enzyme composed of 11 subunits. The complex is composed of 3 respiratory subunits cytochrome b, cytochrome c1 and Rieske protein UQCRFS1, 2 core protein subunits UQCRC1/QCR1 and UQCRC2/QCR2, and 6 low-molecular weight protein subunits UQCRH/QCR6, UQCRB/QCR7, UQCRQ/QCR8, UQCR10/QCR9, UQCR11/QCR10 and subunit 9, the cleavage product of Rieske protein UQCRFS1. The complex exists as an obligatory dimer and forms supercomplexes (SCs) in the inner mitochondrial membrane with NADH-ubiquinone oxidoreductase (complex I, CI) and cytochrome c oxidase (complex IV, CIV), resulting in different assemblies (supercomplex SCI(1)III(2)IV(1) and megacomplex MCI(2)III(2)IV(2)). Incorporation of the Rieske protein UQCRFS1 is the penultimate step in complex III assembly. Interacts with TTC19, which is involved in the clearance of UQCRFS1 fragments. Component of the ubiquinol-cytochrome c oxidoreductase (cytochrome b-c1 complex, complex III, CIII). Subunit 9 corresponds to the mitochondrial targeting sequence (MTS) of Rieske protein UQCRFS1. It is retained after processing and incorporated inside complex III, where it remains bound to the complex and localizes between the 2 core subunits UQCRC1/QCR1 and UQCRC2/QCR2. The cofactor is [2Fe-2S] cluster. Post-translationally, proteolytic processing is necessary for the correct insertion of UQCRFS1 in the complex III dimer. Several fragments are generated during UQCRFS1 insertion, most probably due to the endogenous matrix-processing peptidase (MPP) activity of the 2 core protein subunits UQCRC1/QCR1 and UQCRC2/QCR2, which are homologous to the 2 mitochondrial-processing peptidase (MPP) subunits beta-MPP and alpha-MPP respectively. The action of the protease is also necessary for the clearance of the UQCRFS1 fragments.

It is found in the mitochondrion inner membrane. It catalyses the reaction a quinol + 2 Fe(III)-[cytochrome c](out) = a quinone + 2 Fe(II)-[cytochrome c](out) + 2 H(+)(out). Functionally, component of the ubiquinol-cytochrome c oxidoreductase, a multisubunit transmembrane complex that is part of the mitochondrial electron transport chain which drives oxidative phosphorylation. The respiratory chain contains 3 multisubunit complexes succinate dehydrogenase (complex II, CII), ubiquinol-cytochrome c oxidoreductase (cytochrome b-c1 complex, complex III, CIII) and cytochrome c oxidase (complex IV, CIV), that cooperate to transfer electrons derived from NADH and succinate to molecular oxygen, creating an electrochemical gradient over the inner membrane that drives transmembrane transport and the ATP synthase. The cytochrome b-c1 complex catalyzes electron transfer from ubiquinol to cytochrome c, linking this redox reaction to translocation of protons across the mitochondrial inner membrane, with protons being carried across the membrane as hydrogens on the quinol. In the process called Q cycle, 2 protons are consumed from the matrix, 4 protons are released into the intermembrane space and 2 electrons are passed to cytochrome c. The Rieske protein is a catalytic core subunit containing a [2Fe-2S] iron-sulfur cluster. It cycles between 2 conformational states during catalysis to transfer electrons from the quinol bound in the Q(0) site in cytochrome b to cytochrome c1. Incorporation of UQCRFS1 is the penultimate step in complex III assembly. Component of the ubiquinol-cytochrome c oxidoreductase (cytochrome b-c1 complex, complex III, CIII). UQCRFS1 undergoes proteolytic processing once it is incorporated in the complex III dimer. One of the fragments, called subunit 9, corresponds to its mitochondrial targeting sequence (MTS). The proteolytic processing is necessary for the correct insertion of UQCRFS1 in the complex III dimer, but the persistence of UQCRFS1-derived fragments may prevent newly imported UQCRFS1 to be processed and assembled into complex III and is detrimental for the complex III structure and function. The chain is Cytochrome b-c1 complex subunit Rieske, mitochondrial (UQCRFS1) from Bos taurus (Bovine).